We begin with the raw amino-acid sequence, 99 residues long: U1-theraphotoxin-Lsp1a (99 aa).

The N-terminal stretch at 1-23 is a signal peptide; it reads MRSLTLAALLLCSLLLVFHTSAA. A propeptide spanning residues 24–50 is cleaved from the precursor; sequence AELEAQEGHLMIPGDTDTALETVDDER. 4 disulfides stabilise this stretch: Cys-54/Cys-67, Cys-58/Cys-91, Cys-72/Cys-74, and Cys-85/Cys-96.

Belongs to the neurotoxin 12 (Hwtx-2) family. 04 (lasiotoxin) subfamily. As to expression, expressed by the venom gland.

Its subcellular location is the secreted. Functionally, toxin that causes irreversible contractile paralysis into adult Aedes aegypti resulting in 100% mortality after 24 hours. The polypeptide is U1-theraphotoxin-Lsp1a (Lasiodora sp. (strain IBSP 8539) (Brazilian salmon pink birdeater)).